The sequence spans 589 residues: Delta-like protein 3 (589 aa).

Residues 1–32 form the signal peptide; that stretch reads MVSLQVSSLPQTLILAFLLPQALPAGVFELQI. Topologically, residues 33–494 are extracellular; it reads HSFGPGPGPG…LRQADSQRFL (462 aa). Positions 174 to 213 constitute a DSL domain; it reads ARCEPPAVGAACARLCRSRSAPSRCGPGLRPCTPFPDECE. EGF-like domains are found at residues 218 to 251, 276 to 312, 314 to 353, 355 to 391, 393 to 429, and 431 to 467; these read SLTV…PLCT, GPGP…PRCE, SGVT…SNCE, RVDR…PRCE, DLDD…RDCR, and RADP…VRCE. 18 disulfide bridges follow: cysteine 222/cysteine 233, cysteine 226/cysteine 239, cysteine 241/cysteine 250, cysteine 280/cysteine 291, cysteine 285/cysteine 300, cysteine 302/cysteine 311, cysteine 318/cysteine 329, cysteine 323/cysteine 341, cysteine 343/cysteine 352, cysteine 359/cysteine 370, cysteine 364/cysteine 379, cysteine 381/cysteine 390, cysteine 397/cysteine 408, cysteine 402/cysteine 417, cysteine 419/cysteine 428, cysteine 435/cysteine 446, cysteine 440/cysteine 455, and cysteine 457/cysteine 466. A helical membrane pass occupies residues 495–515; that stretch reads LPPALGLLAAAALAGAALLLI. Topologically, residues 516-589 are cytoplasmic; that stretch reads HVRRRGPGRD…PAPSIYAREA (74 aa). The disordered stretch occupies residues 552–574; sequence QDGAGDGPTSSADWNHPEDGDSR.

Can bind and activate Notch-1 or another Notch receptor. Ubiquitinated by MIB (MIB1 or MIB2), leading to its endocytosis and subsequent degradation.

Its subcellular location is the membrane. Its function is as follows. Inhibits primary neurogenesis. May be required to divert neurons along a specific differentiation pathway. Plays a role in the formation of somite boundaries during segmentation of the paraxial mesoderm. In Rattus norvegicus (Rat), this protein is Delta-like protein 3 (Dll3).